The sequence spans 732 residues: Acetophenone carboxylase gamma subunit (732 aa).

It belongs to the HyuA family. Acetophenone carboxylase consists of five subunits; a heterooctameric subcomplex of two alpha (Apc1), two beta (Apc2), two gamma (Apc3) and two delta (Apc4) subunits assembles with the epsilon (Apc5) subunit in an unknown stoichiometry. Requires Mg(2+) as cofactor. Mn(2+) is required as a cofactor.

The protein resides in the cytoplasm. The catalysed reaction is acetophenone + hydrogencarbonate + 2 ATP + H2O = 3-oxo-3-phenylpropanoate + 2 ADP + 2 phosphate + 2 H(+). With respect to regulation, inhibited by zinc ions, carbamoylphosphate and beta,gamma-imido-ATP. Its function is as follows. Catalyzes the carboxylation of acetophenone to form 3-oxo-3-phenylpropanoate (benzoylacetate) in the anaerobic catabolism of ethylbenzene. Also carboxylates propiophenone at the same rate and 4-acetyl-pyridine at lower rates. This Aromatoleum aromaticum (strain DSM 19018 / LMG 30748 / EbN1) (Azoarcus sp. (strain EbN1)) protein is Acetophenone carboxylase gamma subunit (apc3).